Here is a 300-residue protein sequence, read N- to C-terminus: Tyrosine recombinase XerC (300 aa).

In terms of domain architecture, Core-binding (CB) spans 2-88 (ENVNFTLNLF…SLRSFYKFLL (87 aa)). The region spanning 109 to 294 (KIPHFLYPDE…TKDHLRYVYL (186 aa)) is the Tyr recombinase domain. Residues arginine 149, lysine 173, histidine 246, arginine 249, and histidine 272 contribute to the active site. Catalysis depends on tyrosine 281, which acts as the O-(3'-phospho-DNA)-tyrosine intermediate.

The protein belongs to the 'phage' integrase family. XerC subfamily. As to quaternary structure, forms a cyclic heterotetrameric complex composed of two molecules of XerC and two molecules of XerD.

Its subcellular location is the cytoplasm. Its function is as follows. Site-specific tyrosine recombinase, which acts by catalyzing the cutting and rejoining of the recombining DNA molecules. The XerC-XerD complex is essential to convert dimers of the bacterial chromosome into monomers to permit their segregation at cell division. It also contributes to the segregational stability of plasmids. The chain is Tyrosine recombinase XerC from Anoxybacillus flavithermus (strain DSM 21510 / WK1).